Consider the following 134-residue polypeptide: MPPKTRAAGAKKVRRKEKKNVAHGHAHIKSTFNNTIVSITDPTGNVISWASAGHVGFKGSRKSTPFAAQMAAENAARKAQEHGMRKVDVFVKGPGSGRETAIRSLQAAGLEVGAIQDVTPTPHNGCRPPKRRRV.

Belongs to the universal ribosomal protein uS11 family. In terms of assembly, part of the 30S ribosomal subunit. Interacts with proteins S7 and S18. Binds to IF-3.

In terms of biological role, located on the platform of the 30S subunit, it bridges several disparate RNA helices of the 16S rRNA. Forms part of the Shine-Dalgarno cleft in the 70S ribosome. This Frankia alni (strain DSM 45986 / CECT 9034 / ACN14a) protein is Small ribosomal subunit protein uS11.